The chain runs to 188 residues: Small ribosomal subunit protein bS16 (188 aa).

The disordered stretch occupies residues 155–188 (IAAASATEEAATEEVAEAAEEAPAAEENNETTEA). A compositionally biased stretch (acidic residues) spans 164–188 (AATEEVAEAAEEAPAAEENNETTEA).

It belongs to the bacterial ribosomal protein bS16 family.

In Flavobacterium johnsoniae (strain ATCC 17061 / DSM 2064 / JCM 8514 / BCRC 14874 / CCUG 350202 / NBRC 14942 / NCIMB 11054 / UW101) (Cytophaga johnsonae), this protein is Small ribosomal subunit protein bS16.